Reading from the N-terminus, the 641-residue chain is DEAD-box ATP-dependent RNA helicase 50 (641 aa).

Disordered regions lie at residues 86-115, 129-189, and 197-216; these read SMPS…IGNF, RSAH…LNSV, and DDLD…WGNI. The span at 150 to 159 shows a compositional bias: acidic residues; the sequence is PSDESDEDGT. Positions 240-268 match the Q motif motif; that stretch reads RSFKEIGCSDEILGALRSFGFPRPSHIQA. A Helicase ATP-binding domain is found at 271 to 452; sequence YRPVLEGKSC…VETFPDCELI (182 aa). 284-291 is an ATP binding site; that stretch reads DQSGSGKT. The short motif at 399 to 402 is the DEAD box element; the sequence is DEVD. The region spanning 487–641 is the Helicase C-terminal domain; it reads NKKSALVKII…GHPLHDVPCV (155 aa).

The protein belongs to the DEAD box helicase family.

It carries out the reaction ATP + H2O = ADP + phosphate + H(+). Probably involved in resistance to biotic and abiotic stresses. Confers tolerance to oxidative stress and mediates pathogenesis-related (PR) genes expression. Exhibits RNA-dependent ATPase and ATP-dependent RNA helicase activities in vitro. The protein is DEAD-box ATP-dependent RNA helicase 50 of Oryza sativa subsp. japonica (Rice).